The sequence spans 317 residues: Tenomodulin (317 aa).

The Cytoplasmic portion of the chain corresponds to Met1–Lys30. A helical; Signal-anchor for type II membrane protein membrane pass occupies residues Ile31–Ser50. The Extracellular segment spans residues Lys51–Val317. Positions Gly93–Ile186 constitute a BRICHOS domain. Asn94 carries an N-linked (GlcNAc...) asparagine glycan. Cysteines 120 and 178 form a disulfide. Asn180 carries N-linked (GlcNAc...) asparagine glycosylation. Position 239 is a phosphoserine (Ser239).

It belongs to the chondromodulin-1 family. Highly expressed in hypovascular connective tissues such as tendons. Also has strong expression in adipose tissue.

It localises to the membrane. Its subcellular location is the nucleus envelope. The protein localises to the cytoplasm. In terms of biological role, may be an angiogenesis inhibitor. The protein is Tenomodulin (TNMD) of Homo sapiens (Human).